The chain runs to 500 residues: POU domain, class 3, transcription factor 3 (500 aa).

Gly residues predominate over residues 32–52 (GGGGGGGGGGGGAGGGGGGMQ). Disordered regions lie at residues 32–63 (GGGGGGGGGGGGAGGGGGGMQPGSAAVTSGAY), 122–190 (WSGS…WGAA), 231–319 (NGML…TPTS), and 461–500 (EKRMTPPGIQQQTPDDVYSQVGTVSADTPPPHHGLQTSVQ). Pro residues-rich tracts occupy residues 134-146 (QQPPQPPPPPPQG) and 171-181 (HLGPPPPPPHQ). Residues 241–251 (GGGGGGAGGGA) show a composition bias toward gly residues. Over residues 270–287 (HHHHHHHHAHPHPPHPHH) the composition is skewed to basic residues. Residues 293–303 (HHGGGGGGAGP) are compositionally biased toward gly residues. Residues 314–388 (EDTPTSDDLE…LLNKWLEEAD (75 aa)) enclose the POU-specific domain. Residues 406–465 (KRKKRTSIEVSVKGALESHFLKCPKPSAQEITNLADSLQLEKEVVRVWFCNRRQKEKRMT) constitute a DNA-binding region (homeobox). Polar residues predominate over residues 468–486 (GIQQQTPDDVYSQVGTVSA).

Belongs to the POU transcription factor family. Class-3 subfamily. Homodimer. In terms of tissue distribution, brain.

It is found in the nucleus. Transcription factor that acts synergistically with SOX11 and SOX4. Plays a role in neuronal development. Is implicated in an enhancer activity at the embryonic met-mesencephalic junction; the enhancer element contains the octamer motif (5'-ATTTGCAT-3'). The sequence is that of POU domain, class 3, transcription factor 3 from Homo sapiens (Human).